Consider the following 103-residue polypeptide: MYAVFQSGGKQHRVSEGQVVRLEKLELATGATVEFDSVLMVVNGEDVKIGAPVVAGAKVVAEVIAQGRGEKVKIVKFRRRKHSRKQQGHRQWFTEVKITGIQA.

This sequence belongs to the bacterial ribosomal protein bL21 family. Part of the 50S ribosomal subunit. Contacts protein L20.

Functionally, this protein binds to 23S rRNA in the presence of protein L20. This Haemophilus influenzae (strain 86-028NP) protein is Large ribosomal subunit protein bL21.